A 21-amino-acid polypeptide reads, in one-letter code: Bibrotoxin (21 aa).

2 disulfide bridges follow: Cys1/Cys15 and Cys3/Cys11.

Belongs to the endothelin/sarafotoxin family. In terms of tissue distribution, expressed by the venom gland.

It is found in the secreted. Functionally, vasoconstrictor activity. These toxins cause cardiac arrest probably as a result of coronary vasospasm. May act by displaying agonistic activities towards endothelin-1 and -2 receptors (EDNRA and EDNRB). This Atractaspis bibronii (Bibron's mole viper) protein is Bibrotoxin.